The chain runs to 329 residues: tRNA-modifying protein YgfZ (329 aa).

Folate-binding residues include Trp27 and Trp189.

Belongs to the tRNA-modifying YgfZ family.

It is found in the cytoplasm. Folate-binding protein involved in regulating the level of ATP-DnaA and in the modification of some tRNAs. It is probably a key factor in regulatory networks that act via tRNA modification, such as initiation of chromosomal replication. The protein is tRNA-modifying protein YgfZ of Cronobacter sakazakii (strain ATCC BAA-894) (Enterobacter sakazakii).